Consider the following 130-residue polypeptide: Small ribosomal subunit protein uS8 (130 aa).

Residue Lys-88 is modified to N6-succinyllysine.

It belongs to the universal ribosomal protein uS8 family. As to quaternary structure, component of the small ribosomal subunit. Part of the small subunit (SSU) processome, composed of more than 70 proteins and the RNA chaperone small nucleolar RNA (snoRNA) U3.

The protein localises to the cytoplasm. It localises to the nucleus. Its subcellular location is the nucleolus. In terms of biological role, component of the small ribosomal subunit. The ribosome is a large ribonucleoprotein complex responsible for the synthesis of proteins in the cell. Part of the small subunit (SSU) processome, first precursor of the small eukaryotic ribosomal subunit. During the assembly of the SSU processome in the nucleolus, many ribosome biogenesis factors, an RNA chaperone and ribosomal proteins associate with the nascent pre-rRNA and work in concert to generate RNA folding, modifications, rearrangements and cleavage as well as targeted degradation of pre-ribosomal RNA by the RNA exosome. Required for proper erythropoiesis. The chain is Small ribosomal subunit protein uS8 (Rps15a) from Mus musculus (Mouse).